An 875-amino-acid polypeptide reads, in one-letter code: Valine--tRNA ligase (875 aa).

The 'HIGH' region motif lies at 45–55; it reads PNVTGVLHMGH. A 'KMSKS' region motif is present at residues 524–528; the sequence is KMSKS. Lysine 527 serves as a coordination point for ATP. Residues 803–837 adopt a coiled-coil conformation; that stretch reads VKSLIDKTKELIRLEKQLEKYKMLNISVSKKLENE.

This sequence belongs to the class-I aminoacyl-tRNA synthetase family. ValS type 1 subfamily. As to quaternary structure, monomer.

It localises to the cytoplasm. It catalyses the reaction tRNA(Val) + L-valine + ATP = L-valyl-tRNA(Val) + AMP + diphosphate. Functionally, catalyzes the attachment of valine to tRNA(Val). As ValRS can inadvertently accommodate and process structurally similar amino acids such as threonine, to avoid such errors, it has a 'posttransfer' editing activity that hydrolyzes mischarged Thr-tRNA(Val) in a tRNA-dependent manner. This chain is Valine--tRNA ligase, found in Borreliella burgdorferi (strain ATCC 35210 / DSM 4680 / CIP 102532 / B31) (Borrelia burgdorferi).